The primary structure comprises 74 residues: High-potential iron-sulfur protein isozyme 2 (74 aa).

Residues Cys36, Cys39, Cys53, and Cys67 each coordinate [4Fe-4S] cluster.

As to quaternary structure, homodimer.

In terms of biological role, specific class of high-redox-potential 4Fe-4S ferredoxins. Functions in anaerobic electron transport in most purple and in some other photosynthetic bacteria and in at least one genus (Paracoccus) of halophilic, denitrifying bacteria. In Ectothiorhodospira mobilis, this protein is High-potential iron-sulfur protein isozyme 2.